Here is a 162-residue protein sequence, read N- to C-terminus: Glycine cleavage system H protein, mitochondrial (162 aa).

A mitochondrion-targeting transit peptide spans 1–31; that stretch reads MALRIWASSTANALRLSSATRPHFSPLSRCF. In terms of domain architecture, Lipoyl-binding spans 53 to 135; it reads VATIGITDHA…YEDGWMIKVK (83 aa). Lys-94 bears the N6-lipoyllysine mark.

Belongs to the GcvH family. As to quaternary structure, the glycine cleavage system is composed of four proteins: P, T, L and H. The cofactor is (R)-lipoate.

Its subcellular location is the mitochondrion. In terms of biological role, the glycine cleavage system catalyzes the degradation of glycine. The H protein shuttles the methylamine group of glycine from the P protein to the T protein. The sequence is that of Glycine cleavage system H protein, mitochondrial (GDCSH) from Flaveria pringlei.